Reading from the N-terminus, the 365-residue chain is D-alanine--D-alanine ligase (365 aa).

Residues 156–360 (KKLMAAEGLP…YAQLLDNLIE (205 aa)) enclose the ATP-grasp domain. 183–238 (KRELGLPVFVKPARGGSSIGISRVADWSEWDAALSLAREHDSKVIVEAEIVGVEVE) is a binding site for ATP. 3 residues coordinate Mg(2+): D315, E327, and N329.

The protein belongs to the D-alanine--D-alanine ligase family. Mg(2+) is required as a cofactor. Mn(2+) serves as cofactor.

Its subcellular location is the cytoplasm. It carries out the reaction 2 D-alanine + ATP = D-alanyl-D-alanine + ADP + phosphate + H(+). It functions in the pathway cell wall biogenesis; peptidoglycan biosynthesis. Cell wall formation. This chain is D-alanine--D-alanine ligase, found in Corynebacterium diphtheriae (strain ATCC 700971 / NCTC 13129 / Biotype gravis).